Consider the following 244-residue polypeptide: 1-(5-phosphoribosyl)-5-[(5-phosphoribosylamino)methylideneamino] imidazole-4-carboxamide isomerase (244 aa).

Asp12 (proton acceptor) is an active-site residue. The Proton donor role is filled by Asp131.

Belongs to the HisA/HisF family.

Its subcellular location is the cytoplasm. It carries out the reaction 1-(5-phospho-beta-D-ribosyl)-5-[(5-phospho-beta-D-ribosylamino)methylideneamino]imidazole-4-carboxamide = 5-[(5-phospho-1-deoxy-D-ribulos-1-ylimino)methylamino]-1-(5-phospho-beta-D-ribosyl)imidazole-4-carboxamide. It functions in the pathway amino-acid biosynthesis; L-histidine biosynthesis; L-histidine from 5-phospho-alpha-D-ribose 1-diphosphate: step 4/9. The chain is 1-(5-phosphoribosyl)-5-[(5-phosphoribosylamino)methylideneamino] imidazole-4-carboxamide isomerase from Nocardioides sp. (strain ATCC BAA-499 / JS614).